Reading from the N-terminus, the 468-residue chain is Ribulose bisphosphate carboxylase large chain (468 aa).

Lys-5 bears the N6,N6,N6-trimethyllysine mark. Substrate is bound by residues Asn-114 and Thr-164. Lys-166 functions as the Proton acceptor in the catalytic mechanism. Lys-168 contacts substrate. Mg(2+)-binding residues include Lys-192, Asp-194, and Glu-195. Lys-192 carries the post-translational modification N6-carboxylysine. His-285 functions as the Proton acceptor in the catalytic mechanism. Positions 286, 318, and 370 each coordinate substrate.

Belongs to the RuBisCO large chain family. Type I subfamily. Heterohexadecamer of 8 large chains and 8 small chains; disulfide-linked. The disulfide link is formed within the large subunit homodimers. The cofactor is Mg(2+). In terms of processing, the disulfide bond which can form in the large chain dimeric partners within the hexadecamer appears to be associated with oxidative stress and protein turnover.

The protein localises to the plastid. The protein resides in the chloroplast. The enzyme catalyses 2 (2R)-3-phosphoglycerate + 2 H(+) = D-ribulose 1,5-bisphosphate + CO2 + H2O. It catalyses the reaction D-ribulose 1,5-bisphosphate + O2 = 2-phosphoglycolate + (2R)-3-phosphoglycerate + 2 H(+). Its function is as follows. RuBisCO catalyzes two reactions: the carboxylation of D-ribulose 1,5-bisphosphate, the primary event in carbon dioxide fixation, as well as the oxidative fragmentation of the pentose substrate in the photorespiration process. Both reactions occur simultaneously and in competition at the same active site. The protein is Ribulose bisphosphate carboxylase large chain of Nolana spathulata (Chilean bell flower).